A 357-amino-acid chain; its full sequence is MPRKTTIRISSNALASNLRTIKNYANKSKVWSVIKSNAYGHTIKAALKGLKETSGFAVLELNEAVLLRENGWNGPILLLEGFFEESDLLEICQYKITTVIHNDWQLNYIKQYDIKSPIDVYLKLNSGMNRLGFNEKDFIRTWYDLSNLKKISSLTLMSHFSLGFSTKTVNKQMNIIRKIFKILNPTLCLANSTAIIFHTYTHKDWIRPGIILYGILPKENKKISKKFNLKPVMTLESRIISIQNIKSKEYIGYGKNYYSNKSNLIGIVSCGYADGYPFSVPFSGTPVFVNGTRTQIIGSVCMDMLTIDLNDCPNAKIGSKVELWGNNISINEISKLANTTSYELMCRISSRVLVKIE.

The active-site Proton acceptor; specific for D-alanine is lysine 35. An N6-(pyridoxal phosphate)lysine modification is found at lysine 35. Residue arginine 130 participates in substrate binding. The Proton acceptor; specific for L-alanine role is filled by tyrosine 253. Methionine 302 serves as a coordination point for substrate.

It belongs to the alanine racemase family. Pyridoxal 5'-phosphate serves as cofactor.

The enzyme catalyses L-alanine = D-alanine. It participates in amino-acid biosynthesis; D-alanine biosynthesis; D-alanine from L-alanine: step 1/1. In terms of biological role, catalyzes the interconversion of L-alanine and D-alanine. May also act on other amino acids. The sequence is that of Alanine racemase (alr) from Wigglesworthia glossinidia brevipalpis.